Reading from the N-terminus, the 318-residue chain is Protease HtpX homolog (318 aa).

3 consecutive transmembrane segments (helical) span residues 1-21, 35-55, and 56-76; these read MLEA…VGRL, ILGL…GSAI, and AGLV…SRIV. His167 lines the Zn(2+) pocket. The active site involves Glu168. A Zn(2+)-binding site is contributed by His171. The next 2 helical transmembrane spans lie at 178–198 and 209–229; these read LVMT…DPWL and IAFL…LVAA. Glu235 is a Zn(2+) binding site.

Belongs to the peptidase M48B family. Zn(2+) serves as cofactor.

It localises to the cell membrane. The protein is Protease HtpX homolog of Methanopyrus kandleri (strain AV19 / DSM 6324 / JCM 9639 / NBRC 100938).